A 336-amino-acid polypeptide reads, in one-letter code: Inositol 2-dehydrogenase (336 aa).

It belongs to the Gfo/Idh/MocA family. As to quaternary structure, homotetramer.

It carries out the reaction myo-inositol + NAD(+) = scyllo-inosose + NADH + H(+). Its function is as follows. Involved in the oxidation of myo-inositol (MI) to 2-keto-myo-inositol (2KMI or 2-inosose). The chain is Inositol 2-dehydrogenase from Pseudomonas fluorescens (strain SBW25).